We begin with the raw amino-acid sequence, 241 residues long: N-acetylmuramoyl-L-alanine amidase Rv3717 (241 aa).

Residues Met1–Ile24 form the signal peptide. Residues Val29–Val230 enclose the MurNAc-LAA domain. His35 contacts Zn(2+). The tract at residues Arg45 to Pro69 is disordered. Over residues Lys55 to Gly67 the composition is skewed to polar residues. Cys57 and Cys105 are joined by a disulfide. Zn(2+) contacts are provided by Glu70 and His125. The Proton donor/acceptor role is filled by Glu200.

The protein belongs to the N-acetylmuramoyl-L-alanine amidase 3 family. Monomer. Zn(2+) serves as cofactor.

The protein resides in the periplasm. The enzyme catalyses Hydrolyzes the link between N-acetylmuramoyl residues and L-amino acid residues in certain cell-wall glycopeptides.. The protein operates within cell wall degradation; peptidoglycan degradation. Its activity is regulated as follows. The structure reveals a short flexible hairpin turn that partially occludes the active site and may be involved in autoregulation. Cell-wall hydrolase that hydrolyzes the amide bond between N-acetylmuramic acid and L-alanine in cell-wall glycopeptides. Is able to hydrolyze the cell walls of several bacterial species (i.e. Paenibacillus sp., B.avium, E.coli DH5alpha, E.aerogenes, L.acidophilus, B.thuringiensis, B.pumilus, B.subtilis and E.coli W3110), thereby showing that it is a cell-wall hydrolase with broad-spectrum activity. May have a role in peptidoglycan fragment recycling. The protein is N-acetylmuramoyl-L-alanine amidase Rv3717 of Mycobacterium tuberculosis (strain ATCC 25618 / H37Rv).